Here is a 37-residue protein sequence, read N- to C-terminus: Mu-agatoxin-Aa1d (37 aa).

Intrachain disulfides connect Cys-2–Cys-18, Cys-9–Cys-23, Cys-17–Cys-33, and Cys-25–Cys-31. The residue at position 37 (Asn-37) is an Asparagine amide.

Belongs to the neurotoxin 07 (Beta/delta-agtx) family. 03 (aga-4) subfamily. Aga sub-subfamily. In terms of tissue distribution, expressed by the venom gland.

Its subcellular location is the secreted. Its function is as follows. Insecticidal neurotoxin that induces an irreversible spastic paralysis when injected into insects. Modifies presynaptic voltage-gated sodium channels (Nav), causing them to open at the normal resting potential of the nerve. This leads to spontaneous release of neurotransmitter and repetitive action potentials in motor neurons. The chain is Mu-agatoxin-Aa1d from Agelenopsis aperta (North American funnel-web spider).